A 74-amino-acid polypeptide reads, in one-letter code: Defensin-like protein P322 (74 aa).

The first 19 residues, 1-19 (MRFFATFFLLAMLVVATKM), serve as a signal peptide directing secretion. 4 cysteine pairs are disulfide-bonded: C30/C74, C41/C61, C47/C68, and C51/C70.

It belongs to the DEFL family. Protease inhibitor I18 (RTI/MTI-2) subfamily. As to expression, tuber.

It is found in the secreted. The protein is Defensin-like protein P322 of Solanum tuberosum (Potato).